We begin with the raw amino-acid sequence, 297 residues long: 3-mercaptopyruvate sulfurtransferase (297 aa).

Residue A2 is modified to N-acetylalanine. Positions 25 to 144 (ASQPLKLLDA…WLSQNLPISS (120 aa)) constitute a Rhodanese 1 domain. Residue S35 is modified to Phosphoserine. K40 bears the N6-acetyllysine; alternate mark. K40 carries the post-translational modification N6-succinyllysine; alternate. A hinge region spans residues 145–160 (GKSPSEPAEFCAQLDP). Residues K146 and K164 each carry the N6-succinyllysine modification. The Rhodanese 2 domain maps to 174–288 (DARRFQVVDA…WYMRAQPEHV (115 aa)). R188 contacts substrate. C248 serves as the catalytic Cysteine persulfide intermediate.

Monomer (active form). Homodimer; disulfide-linked (inactive form). In terms of processing, the N-terminus is blocked. As to expression, expressed in liver, heart, kidney and brain. Localizes to tubular epithelium in the kidney, pericentral hepatocytes in the liver, cardiac cells in the heart and neuroglial cells in the brain. Also expressed in vascular endothelium of the thoracic aorta. Weak expression in lung and thymus.

It localises to the cytoplasm. The protein localises to the mitochondrion. The protein resides in the synapse. Its subcellular location is the synaptosome. It carries out the reaction 2-oxo-3-sulfanylpropanoate + [thioredoxin]-dithiol = [thioredoxin]-disulfide + hydrogen sulfide + pyruvate + H(+). With respect to regulation, by oxidative stress, and thioredoxin. Under oxidative stress conditions, the catalytic cysteine site is converted to a sulfenate which inhibits the MPST enzyme activity. Reduced thioredoxin cleaves an intersubunit disulfide bond to turn on the redox switch and reactivate the enzyme. Inhibited by different oxidants, hydrogen peroxide and tetrathionate. In terms of biological role, transfer of a sulfur ion to cyanide or to other thiol compounds. Also has weak rhodanese activity. Detoxifies cyanide and is required for thiosulfate biosynthesis. Acts as an antioxidant. In combination with cysteine aminotransferase (CAT), contributes to the catabolism of cysteine and is an important producer of hydrogen sulfide in the brain, retina and vascular endothelial cells. Hydrogen sulfide H(2)S is an important synaptic modulator, signaling molecule, smooth muscle contractor and neuroprotectant. Its production by the 3MST/CAT pathway is regulated by calcium ions. The protein is 3-mercaptopyruvate sulfurtransferase (Mpst) of Rattus norvegicus (Rat).